The following is a 423-amino-acid chain: ATP-citrate synthase alpha chain protein 2 (423 aa).

3 residues coordinate citrate: N343, T345, and R376.

This sequence belongs to the succinate/malate CoA ligase beta subunit family. Heterooctamer of 4 alpha and 4 beta chains.

The protein resides in the cytoplasm. Its subcellular location is the cytosol. It catalyses the reaction oxaloacetate + acetyl-CoA + ADP + phosphate = citrate + ATP + CoA. In terms of biological role, ATP citrate-lyase is the primary enzyme responsible for the synthesis of cytosolic acetyl-CoA, used for the elongation of fatty acids and biosynthesis of isoprenoids, flavonoids and malonated derivatives. May supply substrate to the cytosolic acetyl-CoA carboxylase, which generates the malonyl-CoA used for the synthesis of a multitude of compounds, including very long chain fatty acids and flavonoids. Required for normal growth and development and elongation of C18 fatty acids to C20 to C24 fatty acids in seeds. In contrast to all known animal ACL enzymes having a homomeric structure, plant ACLs are composed of alpha and beta chains. This Arabidopsis thaliana (Mouse-ear cress) protein is ATP-citrate synthase alpha chain protein 2 (ACLA-2).